We begin with the raw amino-acid sequence, 623 residues long: Chaperone protein HtpG (623 aa).

Positions 1–326 (MAEEKRQFQA…SQDLPLNVSR (326 aa)) are a; substrate-binding. Residues 327 to 543 (EMLQHNPVLS…EGEMSMHLEK (217 aa)) are b. Residues 544–623 (MLRAHNQAPG…VSVMEKGLLG (80 aa)) are c.

Belongs to the heat shock protein 90 family. In terms of assembly, homodimer.

The protein resides in the cytoplasm. Functionally, molecular chaperone. Has ATPase activity. The chain is Chaperone protein HtpG from Paramagnetospirillum magneticum (strain ATCC 700264 / AMB-1) (Magnetospirillum magneticum).